Reading from the N-terminus, the 140-residue chain is Small ribosomal subunit protein uS12 (140 aa).

At D103 the chain carries 3-methylthioaspartic acid. Residues 120-140 (GVQKRMQARSKYGAKRPKKGK) are disordered. Residues 125 to 140 (MQARSKYGAKRPKKGK) show a composition bias toward basic residues.

The protein belongs to the universal ribosomal protein uS12 family. Part of the 30S ribosomal subunit. Contacts proteins S8 and S17. May interact with IF1 in the 30S initiation complex.

In terms of biological role, with S4 and S5 plays an important role in translational accuracy. Its function is as follows. Interacts with and stabilizes bases of the 16S rRNA that are involved in tRNA selection in the A site and with the mRNA backbone. Located at the interface of the 30S and 50S subunits, it traverses the body of the 30S subunit contacting proteins on the other side and probably holding the rRNA structure together. The combined cluster of proteins S8, S12 and S17 appears to hold together the shoulder and platform of the 30S subunit. This Desulfitobacterium hafniense (strain Y51) protein is Small ribosomal subunit protein uS12.